The sequence spans 351 residues: Translation initiation factor eIF2B subunit beta (351 aa).

Belongs to the eIF-2B alpha/beta/delta subunits family. Component of the translation initiation factor 2B (eIF2B) complex which is a heterodecamer of two sets of five different subunits: alpha, beta, gamma, delta and epsilon. Subunits alpha, beta and delta comprise a regulatory subcomplex and subunits epsilon and gamma comprise a catalytic subcomplex. Within the complex, the hexameric regulatory complex resides at the center, with the two heterodimeric catalytic subcomplexes bound on opposite sides.

The protein localises to the cytoplasm. It localises to the cytosol. Its activity is regulated as follows. Activated by the chemical integrated stress response (ISR) inhibitor ISRIB which stimulates guanine nucleotide exchange factor activity for both phosphorylated and unphosphorylated eIF2. Acts as a component of the translation initiation factor 2B (eIF2B) complex, which catalyzes the exchange of GDP for GTP on eukaryotic initiation factor 2 (eIF2) gamma subunit. Its guanine nucleotide exchange factor activity is repressed when bound to eIF2 complex phosphorylated on the alpha subunit, thereby limiting the amount of methionyl-initiator methionine tRNA available to the ribosome and consequently global translation is repressed. The chain is Translation initiation factor eIF2B subunit beta (EIF2B2) from Oryctolagus cuniculus (Rabbit).